The primary structure comprises 644 residues: Exoribonuclease 2 (644 aa).

The RNB domain maps to 189 to 516 (RQDLTALNFV…NHRLLKAVIK (328 aa)). Positions 561 to 643 (NTRFAAEIID…ETRSIIARPA (83 aa)) constitute an S1 motif domain.

Belongs to the RNR ribonuclease family. RNase II subfamily.

It localises to the cytoplasm. The enzyme catalyses Exonucleolytic cleavage in the 3'- to 5'-direction to yield nucleoside 5'-phosphates.. Functionally, involved in mRNA degradation. Hydrolyzes single-stranded polyribonucleotides processively in the 3' to 5' direction. The polypeptide is Exoribonuclease 2 (Salmonella paratyphi A (strain ATCC 9150 / SARB42)).